The primary structure comprises 192 residues: Segregation and condensation protein B (192 aa).

This sequence belongs to the ScpB family. As to quaternary structure, homodimer. Homodimerization may be required to stabilize the binding of ScpA to the Smc head domains. Component of a cohesin-like complex composed of ScpA, ScpB and the Smc homodimer, in which ScpA and ScpB bind to the head domain of Smc. The presence of the three proteins is required for the association of the complex with DNA.

It localises to the cytoplasm. Its function is as follows. Participates in chromosomal partition during cell division. May act via the formation of a condensin-like complex containing Smc and ScpA that pull DNA away from mid-cell into both cell halves. The sequence is that of Segregation and condensation protein B from Mycoplasma mobile (strain ATCC 43663 / 163K / NCTC 11711) (Mesomycoplasma mobile).